Consider the following 66-residue polypeptide: Gallinacin-5 (66 aa).

Residues 1–19 (MQILTLLFAVLLLMLRAEP) form the signal peptide. A propeptide spanning residues 20 to 25 (GLSLAR) is cleaved from the precursor. Disulfide bonds link Cys-31–Cys-59, Cys-38–Cys-53, and Cys-43–Cys-60.

This sequence belongs to the beta-defensin family. In terms of tissue distribution, strong expression in the tongue and bone marrow. Low expression in the esophagus, trachea, lung, brain and ovary. Expressed in the ovarian stroma, but not in the ovarian follicles.

The protein resides in the secreted. The protein localises to the cytoplasmic granule. Its function is as follows. Has bactericidal activity. The sequence is that of Gallinacin-5 (GAL5) from Gallus gallus (Chicken).